We begin with the raw amino-acid sequence, 444 residues long: Trimethylamine monooxygenase (444 aa).

FAD is bound by residues cysteine 12, glutamate 37, glutamine 39, leucine 45, and tryptophan 46. NADP(+)-binding residues include tryptophan 70 and asparagine 72. The FAD site is built by asparagine 72 and valine 125. 7 residues coordinate NADP(+): tyrosine 170, serine 202, serine 203, serine 205, arginine 226, histidine 227, and asparagine 288. Residues glutamine 315 and threonine 318 each contribute to the FAD site. Arginine 409 is a binding site for NADP(+).

Belongs to the FMO family. Homodimer. It depends on FAD as a cofactor.

It carries out the reaction trimethylamine + NADPH + O2 = trimethylamine N-oxide + NADP(+) + H2O. Functionally, catalyzes the oxidation of trimethylamine (TMA) to produce trimethylamine N-oxide (TMAO). In vitro, has a broad substrate specificity, oxidizing many nitrogen- and sulfur-containing compounds, including dimethylamine (DMA), dimethylsulfide (DMS), dimethylsulfoxide (DMSO) and methimazole. TMA shows the highest affinity. This is Trimethylamine monooxygenase from Pelagibacter sp. (strain HTCC7211).